Consider the following 197-residue polypeptide: Rac-like GTP-binding protein ARAC1 (197 aa).

Position 13 to 20 (Gly-13 to Thr-20) interacts with GTP. The Effector region motif lies at Tyr-35–Phe-43. GTP-binding positions include Asp-60–Gln-64 and Thr-118–Asp-121. A Cysteine methyl ester modification is found at Cys-194. A lipid anchor (S-geranylgeranyl cysteine) is attached at Cys-194. The propeptide at Ser-195–Leu-197 is removed in mature form.

It belongs to the small GTPase superfamily. Rho family. As to quaternary structure, interacts with SPK1. In terms of tissue distribution, ubiquitous.

The protein localises to the cytoplasm. The protein resides in the membrane. In terms of biological role, inactive GDP-bound Rho GTPases reside in the cytosol, are found in a complex with Rho GDP-dissociation inhibitors (Rho GDIs), and are released from the GDI protein in order to translocate to membranes upon activation. The sequence is that of Rac-like GTP-binding protein ARAC1 (ARAC1) from Arabidopsis thaliana (Mouse-ear cress).